A 292-amino-acid polypeptide reads, in one-letter code: MILAAPTGAGKTSLVTELDPTRFEILSFDSRQIYKNMSIGTAAPTKKEQSKIAHHLVEVLSPSEAVDAGLYNRLAEEALQKVLNLDKIPVFTAGTGFYLKAFLFGMFPVPEIDVSVRDRVLSMSKEEKKNLLKELDPNALDKIFPEDDYRLGRALEVNLMGEKWSRLKIDPNTSAICRYDLDIRLGVFLDLDRKELYERINLRAKQMIEKGMADEAWKIQERFGETCPGLKSLGYNFALENKKGNSNLETFLADLSRSHRNYAKRQVTWFRKEPYVQPMGRSEALERIKHMK.

5–12 (APTGAGKT) contacts ATP. Position 7 to 12 (7 to 12 (TGAGKT)) interacts with substrate. The segment at 29–32 (DSRQ) is interaction with substrate tRNA.

This sequence belongs to the IPP transferase family. Monomer. The cofactor is Mg(2+).

The enzyme catalyses adenosine(37) in tRNA + dimethylallyl diphosphate = N(6)-dimethylallyladenosine(37) in tRNA + diphosphate. Functionally, catalyzes the transfer of a dimethylallyl group onto the adenine at position 37 in tRNAs that read codons beginning with uridine, leading to the formation of N6-(dimethylallyl)adenosine (i(6)A). This chain is tRNA dimethylallyltransferase, found in Leptospira borgpetersenii serovar Hardjo-bovis (strain JB197).